The primary structure comprises 318 residues: Endochitinase 3 (318 aa).

The N-terminal stretch at 1-18 (EFTIFSLLFSLLLLNASA) is a signal peptide. In terms of domain architecture, Chitin-binding type-1 spans 19-60 (EQCGSQAGGALCAPGLCCSKFGWCGNTNDYCGPGNCQSQCPG). Cystine bridges form between Cys-21–Cys-36, Cys-30–Cys-42, Cys-35–Cys-49, Cys-54–Cys-58, Cys-89–Cys-152, Cys-164–Cys-172, and Cys-271–Cys-303. Glu-134 acts as the Proton donor in catalysis. A propeptide spans 312-318 (GLLVDTV) (removed in mature form, vacuolar targeting).

This sequence belongs to the glycosyl hydrolase 19 family. Chitinase class I subfamily.

Its subcellular location is the vacuole. The enzyme catalyses Random endo-hydrolysis of N-acetyl-beta-D-glucosaminide (1-&gt;4)-beta-linkages in chitin and chitodextrins.. Its function is as follows. Defense against chitin-containing fungal pathogens. This is Endochitinase 3 (CHTB3) from Solanum tuberosum (Potato).